The following is a 252-amino-acid chain: Probable transcriptional regulatory protein Bcav_1989 (252 aa).

This sequence belongs to the TACO1 family.

It is found in the cytoplasm. This is Probable transcriptional regulatory protein Bcav_1989 from Beutenbergia cavernae (strain ATCC BAA-8 / DSM 12333 / CCUG 43141 / JCM 11478 / NBRC 16432 / NCIMB 13614 / HKI 0122).